Here is a 29-residue protein sequence, read N- to C-terminus: Cytochrome b6-f complex subunit 8 (29 aa).

The helical transmembrane segment at 3-23 threads the bilayer; sequence ILSLGWAALMTMFTFSLALTV.

This sequence belongs to the PetN family. In terms of assembly, the 4 large subunits of the cytochrome b6-f complex are cytochrome b6, subunit IV (17 kDa polypeptide, PetD), cytochrome f and the Rieske protein, while the 4 small subunits are PetG, PetL, PetM and PetN. The complex functions as a dimer.

Its subcellular location is the plastid. It is found in the chloroplast thylakoid membrane. Component of the cytochrome b6-f complex, which mediates electron transfer between photosystem II (PSII) and photosystem I (PSI), cyclic electron flow around PSI, and state transitions. This Phaeodactylum tricornutum (strain CCAP 1055/1) protein is Cytochrome b6-f complex subunit 8.